The following is a 68-amino-acid chain: Serine palmitoyltransferase small subunit A (68 aa).

The Cytoplasmic portion of the chain corresponds to 1 to 9 (MAFGDAWKQ). The helical transmembrane segment at 10-26 (LSWFYYQYLLVTALYML) threads the bilayer. Topologically, residues 27-31 (EPWER) are lumenal. Residues 32–54 (TIFNSLLISVAAMAVYTGYVFMP) traverse the membrane as a helical segment. The Cytoplasmic segment spans residues 55–68 (QHIMAILHYFEVVQ).

The protein belongs to the SPTSS family. SPTSSA subfamily. In terms of assembly, component of the serine palmitoyltransferase (SPT) complex, which is composed of SPTLC1, SPTLC2 or SPTLC3 and SPTSSA or SPTSSB. The heterodimer consisting of SPTLC1 and SPTLC2/SPTLC3 forms the catalytic core of the enzyme, while SPTSSA or SPTSSB subunits determine substrate specificity. SPT also interacts with ORMDL proteins, especially ORMDL3, which negatively regulate SPT activity in the presence of ceramides.

It is found in the endoplasmic reticulum membrane. It participates in lipid metabolism; sphingolipid metabolism. Component of the serine palmitoyltransferase multisubunit enzyme (SPT) that catalyzes the initial and rate-limiting step in sphingolipid biosynthesis by condensing L-serine and activated acyl-CoA (most commonly palmitoyl-CoA) to form long-chain bases. The SPT complex is composed of SPTLC1, SPTLC2 or SPTLC3 and SPTSSA or SPTSSB. Within this complex, the heterodimer consisting of SPTLC1 and SPTLC2/SPTLC3 forms the catalytic core. Within the SPT complex, SPTSSA stimulates the catalytic activity and plays a role in substrate specificity, which depends upon the overall complex composition. The SPTLC1-SPTLC2-SPTSSA complex shows a strong preference for C16-CoA substrate, while the SPTLC1-SPTLC3-SPTSSA isozyme uses both C14-CoA and C16-CoA as substrates, with a slight preference for C14-CoA. Independently of its action as a SPT component, may be involved in MBOAT7 localization to mitochondria-associated membranes, a membrane bridge between the endoplasmic reticulum and mitochondria, may hence affect MBOAT7-catalyzed incorporation of arachidonic acid into phosphatidylinositol. The polypeptide is Serine palmitoyltransferase small subunit A (sptssa) (Danio rerio (Zebrafish)).